The sequence spans 292 residues: Fat storage-inducing transmembrane protein 1 (292 aa).

At 1–18 the chain is on the lumenal side; the sequence is MERGPVVGAGRGAGARIR. The chain crosses the membrane as a helical span at residues 19 to 39; sequence ALLGGLVRVLLWVASALLYFG. The Cytoplasmic segment spans residues 40 to 54; the sequence is SEQAARLLGSPCLRR. A helical transmembrane segment spans residues 55–75; it reads LYHAWLAAVVIFGPLLQFHVN. At 76 to 94 the chain is on the lumenal side; the sequence is PRTIFASHGNFFNIKFVNS. A helical transmembrane segment spans residues 95 to 115; the sequence is AWGWTCTFLGGFVLLVVFLAT. Residues 116–141 lie on the Cytoplasmic side of the membrane; sequence RRVAVTARHLSRLVVGAAVWRGAGRA. A helical transmembrane segment spans residues 142-162; that stretch reads FLLIEDLTGSCFEPLPQGLLL. Over 163–187 the chain is Lumenal; that stretch reads HELPDRRSCLAAGHQWRGYTVSSHT. The active site involves histidine 186. Residues 188–208 traverse the membrane as a helical segment; sequence FLLTFCCLLMAEEAAVFAKYL. Over 209 to 220 the chain is Cytoplasmic; that stretch reads AHGLPAGAPLRL. A helical transmembrane segment spans residues 221 to 241; it reads VFLLNVLLLGLWNFLLLCTVI. Over 242-249 the chain is Lumenal; sequence YFHQYTHK. Histidine 244 is a catalytic residue. The helical transmembrane segment at 250-270 threads the bilayer; it reads VVGAAVGTFAWYLTYGSWYHQ. The Cytoplasmic portion of the chain corresponds to 271 to 292; the sequence is PWSPGSPGHGLFPRPHSIHKHN.

It belongs to the FIT family. FIT1 subfamily.

The protein localises to the endoplasmic reticulum membrane. Functionally, plays an important role in the formation of lipid droplets (LDs) which are storage organelles at the center of lipid and energy homeostasis. Directly binds to diacylglycerol (DAGs) and triacylglycerol. In Bos taurus (Bovine), this protein is Fat storage-inducing transmembrane protein 1.